Reading from the N-terminus, the 240-residue chain is Agamous-like MADS-box protein AGL16 (240 aa).

The 61-residue stretch at 1-61 (MGRGKIAIKR…GRLYDFSSSS (61 aa)) folds into the MADS-box domain. A K-box domain is found at 86–176 (IQFWQKEAAI…HKKVNLMHQQ (91 aa)).

As to quaternary structure, homodimer. Interacts with AGL15, AGL24, AP1, AGL6, AG, AGL1, AGL11, AGL5, SEP3, SEP1, AGL63, AGL14, SOC1 and AGL21. Interacts with AGL63. Interacts with SVP. In terms of tissue distribution, expressed at high levels in leaves, moderate levels in roots, seedlings and stems, and at low levels in flowers, pollen and siliques. Accumulates in leaf guard cells and trichomes. Also present in epidermal cells of roots. Expressed in mature guard cells.

It is found in the nucleus. In terms of biological role, probable transcription factor involved in the regulation of flowering time in long-day photoperiod. Participates in the repression of FT expression and floral transition, by interacting closely with the FLC-SVP pathways. Functions in the satellite meristemoid lineage of stomatal development. This is Agamous-like MADS-box protein AGL16 (AGL16) from Arabidopsis thaliana (Mouse-ear cress).